A 180-amino-acid chain; its full sequence is Crossover junction endodeoxyribonuclease RuvC (180 aa).

Residues Asp-7, Glu-66, and Asp-138 contribute to the active site. Mg(2+) contacts are provided by Asp-7, Glu-66, and Asp-138.

The protein belongs to the RuvC family. In terms of assembly, homodimer which binds Holliday junction (HJ) DNA. The HJ becomes 2-fold symmetrical on binding to RuvC with unstacked arms; it has a different conformation from HJ DNA in complex with RuvA. In the full resolvosome a probable DNA-RuvA(4)-RuvB(12)-RuvC(2) complex forms which resolves the HJ. Mg(2+) serves as cofactor.

Its subcellular location is the cytoplasm. It carries out the reaction Endonucleolytic cleavage at a junction such as a reciprocal single-stranded crossover between two homologous DNA duplexes (Holliday junction).. Functionally, the RuvA-RuvB-RuvC complex processes Holliday junction (HJ) DNA during genetic recombination and DNA repair. Endonuclease that resolves HJ intermediates. Cleaves cruciform DNA by making single-stranded nicks across the HJ at symmetrical positions within the homologous arms, yielding a 5'-phosphate and a 3'-hydroxyl group; requires a central core of homology in the junction. The consensus cleavage sequence is 5'-(A/T)TT(C/G)-3'. Cleavage occurs on the 3'-side of the TT dinucleotide at the point of strand exchange. HJ branch migration catalyzed by RuvA-RuvB allows RuvC to scan DNA until it finds its consensus sequence, where it cleaves and resolves the cruciform DNA. This Paraburkholderia phytofirmans (strain DSM 17436 / LMG 22146 / PsJN) (Burkholderia phytofirmans) protein is Crossover junction endodeoxyribonuclease RuvC.